A 314-amino-acid chain; its full sequence is Small ribosomal subunit biogenesis GTPase RsgA (314 aa).

Residues 78–238 (SEIFREKLIA…IIDSPGFQEF (161 aa)) form the CP-type G domain. GTP is bound by residues 127–130 (NKID) and 180–188 (GQSGVGKST). Zn(2+)-binding residues include C262, C267, H269, and C275.

Belongs to the TRAFAC class YlqF/YawG GTPase family. RsgA subfamily. As to quaternary structure, monomer. Associates with 30S ribosomal subunit, binds 16S rRNA. Requires Zn(2+) as cofactor.

It localises to the cytoplasm. Functionally, one of several proteins that assist in the late maturation steps of the functional core of the 30S ribosomal subunit. Helps release RbfA from mature subunits. May play a role in the assembly of ribosomal proteins into the subunit. Circularly permuted GTPase that catalyzes slow GTP hydrolysis, GTPase activity is stimulated by the 30S ribosomal subunit. This Nitrosomonas europaea (strain ATCC 19718 / CIP 103999 / KCTC 2705 / NBRC 14298) protein is Small ribosomal subunit biogenesis GTPase RsgA.